The primary structure comprises 890 residues: DNA mismatch repair protein MutS (890 aa).

607 to 614 is an ATP binding site; it reads GPNMSGKS.

Belongs to the DNA mismatch repair MutS family.

Functionally, this protein is involved in the repair of mismatches in DNA. It is possible that it carries out the mismatch recognition step. This protein has a weak ATPase activity. This is DNA mismatch repair protein MutS from Bacillus thuringiensis subsp. konkukian (strain 97-27).